A 641-amino-acid polypeptide reads, in one-letter code: MNKQQKPKRSPLRPDYLVIVIIILLAIGMYFFFTEMMAPKVKQFDEFEFIAAIESGQIATVRSEYVGGDNFNLWEVTGTFTTGNAPEGVGSYVIILYGDRLNNIQDIIITYNELNPSTPITVSFVPHVSVDFWNIISTLLLIAAPIVLVVIMFRSMSSQSNKAQDFTKNRAKLSQGRKVKFSDIAGADEEKAEMAELIDFLKNPKKYADMGARVPKGVLLVGQPGTGKTLLAKAVAGEAQVPFFSISGSDFVELYVGVGASRVRDLFKVAKQSAPCIIFIDEIDAVGRQRGAGMGGGNDEREQTLNQLLVEMDGFSANLGIIIMAATNRPDVLDPALLRPGRFDRQITMQVPDQKSREEILKVHARSKKLDPTIKFSEVAMRIPGFTGADIENLLNEAALLAARESRTVISMQDIDEAADRVTMGPAKKSRKYSPNEKKMVAYHEAGHAVIGLKVNLASTVQKVTIVPRGRAGGYALYTPVEEKFNYAKSELLAMITSALGGRVAEEIMFDDVTTGAYDDFKRATKLARSMVTEYGMSDLGPIQYESDSGNVFLGRDYLKDKNFSDAVALEIDREVRAIITECYEHARKVINENKNLLDNIAKYLIAVETLTKTDIDEIAATGQLQWWDNREVEEDSKKSE.

Topologically, residues 1–16 (MNKQQKPKRSPLRPDY) are cytoplasmic. Residues 17–37 (LVIVIIILLAIGMYFFFTEMM) form a helical membrane-spanning segment. Residues 38-131 (APKVKQFDEF…VSFVPHVSVD (94 aa)) lie on the Extracellular side of the membrane. A helical transmembrane segment spans residues 132–152 (FWNIISTLLLIAAPIVLVVIM). The Cytoplasmic segment spans residues 153–641 (FRSMSSQSNK…EVEEDSKKSE (489 aa)). Residue 222–229 (GQPGTGKT) participates in ATP binding. Residue His444 coordinates Zn(2+). Glu445 is a catalytic residue. 2 residues coordinate Zn(2+): His448 and Asp520.

The protein in the central section; belongs to the AAA ATPase family. It in the C-terminal section; belongs to the peptidase M41 family. Homohexamer. Zn(2+) serves as cofactor.

It is found in the cell membrane. In terms of biological role, acts as a processive, ATP-dependent zinc metallopeptidase for both cytoplasmic and membrane proteins. Plays a role in the quality control of integral membrane proteins. This chain is ATP-dependent zinc metalloprotease FtsH, found in Acholeplasma laidlawii (strain PG-8A).